A 211-amino-acid polypeptide reads, in one-letter code: Large ribosomal subunit protein uL3 (211 aa).

It belongs to the universal ribosomal protein uL3 family. In terms of assembly, part of the 50S ribosomal subunit. Forms a cluster with proteins L14 and L19.

Functionally, one of the primary rRNA binding proteins, it binds directly near the 3'-end of the 23S rRNA, where it nucleates assembly of the 50S subunit. The protein is Large ribosomal subunit protein uL3 of Trichlorobacter lovleyi (strain ATCC BAA-1151 / DSM 17278 / SZ) (Geobacter lovleyi).